An 88-amino-acid chain; its full sequence is Small integral membrane protein 13 (88 aa).

Residues Leu-10–Val-30 form a helical membrane-spanning segment. Residues Thr-48 to Gly-60 are compositionally biased toward polar residues. A disordered region spans residues Thr-48 to His-88. Phosphoserine occurs at positions 59, 61, and 70. Basic residues predominate over residues His-72–Arg-81.

It belongs to the SMIM13 family.

The protein resides in the membrane. The sequence is that of Small integral membrane protein 13 (Smim13) from Rattus norvegicus (Rat).